The sequence spans 469 residues: ATP synthase subunit beta (469 aa).

157-164 (GGAGVGKT) contributes to the ATP binding site.

Belongs to the ATPase alpha/beta chains family. As to quaternary structure, F-type ATPases have 2 components, CF(1) - the catalytic core - and CF(0) - the membrane proton channel. CF(1) has five subunits: alpha(3), beta(3), gamma(1), delta(1), epsilon(1). CF(0) has three main subunits: a(1), b(2) and c(9-12). The alpha and beta chains form an alternating ring which encloses part of the gamma chain. CF(1) is attached to CF(0) by a central stalk formed by the gamma and epsilon chains, while a peripheral stalk is formed by the delta and b chains.

The protein localises to the cell membrane. It carries out the reaction ATP + H2O + 4 H(+)(in) = ADP + phosphate + 5 H(+)(out). In terms of biological role, produces ATP from ADP in the presence of a proton gradient across the membrane. The catalytic sites are hosted primarily by the beta subunits. The sequence is that of ATP synthase subunit beta from Brevibacillus brevis (strain 47 / JCM 6285 / NBRC 100599).